Here is a 754-residue protein sequence, read N- to C-terminus: DNA topoisomerase 4 subunit A (754 aa).

Residues 38–501 (LPHIGDGLKP…EARALSETEL (464 aa)) enclose the Topo IIA-type catalytic domain. Tyr-127 functions as the O-(5'-phospho-DNA)-tyrosine intermediate in the catalytic mechanism.

This sequence belongs to the type II topoisomerase GyrA/ParC subunit family. ParC type 1 subfamily. Heterotetramer composed of ParC and ParE.

Its subcellular location is the cell membrane. It catalyses the reaction ATP-dependent breakage, passage and rejoining of double-stranded DNA.. Functionally, topoisomerase IV is essential for chromosome segregation. It relaxes supercoiled DNA. Performs the decatenation events required during the replication of a circular DNA molecule. The chain is DNA topoisomerase 4 subunit A from Pseudomonas aeruginosa (strain ATCC 15692 / DSM 22644 / CIP 104116 / JCM 14847 / LMG 12228 / 1C / PRS 101 / PAO1).